Here is a 218-residue protein sequence, read N- to C-terminus: Kynurenine formamidase (218 aa).

A substrate-binding site is contributed by W27. H57, H61, and D63 together coordinate Zn(2+). H67 serves as the catalytic Proton donor/acceptor. Zn(2+)-binding residues include H169 and E181.

The protein belongs to the Cyclase 1 superfamily. KynB family. Homodimer. Zn(2+) serves as cofactor.

It carries out the reaction N-formyl-L-kynurenine + H2O = L-kynurenine + formate + H(+). It participates in amino-acid degradation; L-tryptophan degradation via kynurenine pathway; L-kynurenine from L-tryptophan: step 2/2. Its activity is regulated as follows. Inhibited by EDTA. Insensitive to phenylmethylsulfonyl fluoride (PMSF). Its function is as follows. Catalyzes the hydrolysis of N-formyl-L-kynurenine to L-kynurenine, the second step in the kynurenine pathway of tryptophan degradation. This is Kynurenine formamidase from Cupriavidus metallidurans (strain ATCC 43123 / DSM 2839 / NBRC 102507 / CH34) (Ralstonia metallidurans).